Reading from the N-terminus, the 380-residue chain is L-lactate dehydrogenase (380 aa).

Positions 1–380 constitute an FMN hydroxy acid dehydrogenase domain; sequence MIISASTDYR…SADSLVQGLR (380 aa). Position 24 (Tyr-24) interacts with substrate. Residues Ser-106 and Gln-127 each contribute to the FMN site. Tyr-129 contributes to the substrate binding site. Thr-155 contributes to the FMN binding site. Residue Arg-164 coordinates substrate. Lys-251 contributes to the FMN binding site. The active-site Proton acceptor is His-275. Arg-278 is a substrate binding site. Position 306 to 330 (306 to 330) interacts with FMN; it reads DSGIRSGLDVVRMIALGADGVLLGR.

The protein belongs to the FMN-dependent alpha-hydroxy acid dehydrogenase family. The cofactor is FMN.

It localises to the cell inner membrane. The catalysed reaction is (S)-lactate + A = pyruvate + AH2. Its function is as follows. Catalyzes the conversion of L-lactate to pyruvate. Is coupled to the respiratory chain. This Serratia proteamaculans (strain 568) protein is L-lactate dehydrogenase.